Here is a 245-residue protein sequence, read N- to C-terminus: 1-(5-phosphoribosyl)-5-[(5-phosphoribosylamino)methylideneamino] imidazole-4-carboxamide isomerase (245 aa).

Asp7 functions as the Proton acceptor in the catalytic mechanism. The active-site Proton donor is Asp129.

The protein belongs to the HisA/HisF family.

Its subcellular location is the cytoplasm. The catalysed reaction is 1-(5-phospho-beta-D-ribosyl)-5-[(5-phospho-beta-D-ribosylamino)methylideneamino]imidazole-4-carboxamide = 5-[(5-phospho-1-deoxy-D-ribulos-1-ylimino)methylamino]-1-(5-phospho-beta-D-ribosyl)imidazole-4-carboxamide. It functions in the pathway amino-acid biosynthesis; L-histidine biosynthesis; L-histidine from 5-phospho-alpha-D-ribose 1-diphosphate: step 4/9. This Aliivibrio fischeri (strain MJ11) (Vibrio fischeri) protein is 1-(5-phosphoribosyl)-5-[(5-phosphoribosylamino)methylideneamino] imidazole-4-carboxamide isomerase.